The following is a 183-amino-acid chain: Inosine/xanthosine triphosphatase (183 aa).

Aspartate 75 contacts Mg(2+). A substrate-binding site is contributed by 75 to 76; it reads DG.

It belongs to the YjjX NTPase family. Homodimer. The cofactor is Mg(2+). Requires Mn(2+) as cofactor.

It catalyses the reaction XTP + H2O = XDP + phosphate + H(+). It carries out the reaction ITP + H2O = IDP + phosphate + H(+). Phosphatase that hydrolyzes non-canonical purine nucleotides such as XTP and ITP to their respective diphosphate derivatives. Probably excludes non-canonical purines from DNA/RNA precursor pool, thus preventing their incorporation into DNA/RNA and avoiding chromosomal lesions. In Vibrio vulnificus (strain YJ016), this protein is Inosine/xanthosine triphosphatase.